A 314-amino-acid chain; its full sequence is Acetyl-coenzyme A carboxylase carboxyl transferase subunit beta (314 aa).

In terms of domain architecture, CoA carboxyltransferase N-terminal spans 44-311 (LMNKCPHCGT…VETWQASSPL (268 aa)). 4 residues coordinate Zn(2+): cysteine 48, cysteine 51, cysteine 67, and cysteine 70. The C4-type zinc finger occupies 48–70 (CPHCGTIHYSKDLEKNLRVCKGC).

Belongs to the AccD/PCCB family. Acetyl-CoA carboxylase is a heterohexamer composed of biotin carboxyl carrier protein (AccB), biotin carboxylase (AccC) and two subunits each of ACCase subunit alpha (AccA) and ACCase subunit beta (AccD). It depends on Zn(2+) as a cofactor.

Its subcellular location is the cytoplasm. It carries out the reaction N(6)-carboxybiotinyl-L-lysyl-[protein] + acetyl-CoA = N(6)-biotinyl-L-lysyl-[protein] + malonyl-CoA. It functions in the pathway lipid metabolism; malonyl-CoA biosynthesis; malonyl-CoA from acetyl-CoA: step 1/1. In terms of biological role, component of the acetyl coenzyme A carboxylase (ACC) complex. Biotin carboxylase (BC) catalyzes the carboxylation of biotin on its carrier protein (BCCP) and then the CO(2) group is transferred by the transcarboxylase to acetyl-CoA to form malonyl-CoA. This is Acetyl-coenzyme A carboxylase carboxyl transferase subunit beta from Brevibacillus brevis (strain 47 / JCM 6285 / NBRC 100599).